A 336-amino-acid chain; its full sequence is Quinolinate synthase (336 aa).

Positions 25 and 42 each coordinate iminosuccinate. C86 contributes to the [4Fe-4S] cluster binding site. Iminosuccinate is bound by residues Y117–N119 and S138. C198 is a binding site for [4Fe-4S] cluster. Residues H224 to E226 and T241 contribute to the iminosuccinate site. C288 contacts [4Fe-4S] cluster.

Belongs to the quinolinate synthase family. Type 3 subfamily. It depends on [4Fe-4S] cluster as a cofactor.

Its subcellular location is the cytoplasm. It carries out the reaction iminosuccinate + dihydroxyacetone phosphate = quinolinate + phosphate + 2 H2O + H(+). It functions in the pathway cofactor biosynthesis; NAD(+) biosynthesis; quinolinate from iminoaspartate: step 1/1. In terms of biological role, catalyzes the condensation of iminoaspartate with dihydroxyacetone phosphate to form quinolinate. In Helicobacter pylori (strain HPAG1), this protein is Quinolinate synthase.